Here is a 466-residue protein sequence, read N- to C-terminus: Cell division protein FtsP (466 aa).

Residues 1 to 28 (MGNYSRRRFLQGSLAIVAGNVLPCAAMA) constitute a signal peptide (tat-type signal).

The protein belongs to the FtsP family. Post-translationally, predicted to be exported by the Tat system. The position of the signal peptide cleavage has not been experimentally proven.

The protein resides in the periplasm. Functionally, cell division protein that is required for growth during stress conditions. May be involved in protecting or stabilizing the divisomal assembly under conditions of stress. In Gallibacterium anatis (strain UMN179) (Pasteurella anatis), this protein is Cell division protein FtsP.